A 427-amino-acid chain; its full sequence is Endothelin-1 receptor (427 aa).

The signal sequence occupies residues 1-20; it reads METFWLRVSFWVALVGGVIS. Over 21 to 80 the chain is Extracellular; that stretch reads DNPESYSTNLSIHVDSVTTFRGTELSFVVTTHQPTNLALPSNGSMHNYCPQQTKITSAFK. Asn29 and Asn62 each carry an N-linked (GlcNAc...) asparagine glycan. Residues 81-102 form a helical membrane-spanning segment; it reads YINTVISCTIFIVGMVGNATLL. Residues 103-112 are Cytoplasmic-facing; it reads RIIYQNKCMR. The helical transmembrane segment at 113–132 threads the bilayer; that stretch reads NGPNALIASLALGDLIYVVI. Over 133–159 the chain is Extracellular; it reads DLPINVFKLLAGRWPFEQNDFGVFLCK. Cys158 and Cys239 are joined by a disulfide. A helical transmembrane segment spans residues 160-181; sequence LFPFLQKSSVGITVLNLCALSV. The Cytoplasmic segment spans residues 182-205; that stretch reads DRYRAVASWSRVQGIGIPLVTAIE. Residues 206-229 form a helical membrane-spanning segment; sequence IVSIWILSFILAIPEAIGFVMVPF. The Extracellular segment spans residues 230-256; it reads EYKGAQHRTCMLNATSKFMEFYQDVKD. The helical transmembrane segment at 257–278 threads the bilayer; that stretch reads WWLFGFYFCMPLVCTAIFYTLM. At 279 to 306 the chain is on the cytoplasmic side; the sequence is TCEMLNRRNGSLRIALSEHLKQRREVAK. A helical transmembrane segment spans residues 307-328; it reads TVFCLVVIFALCWFPLHLSRIL. Topologically, residues 329 to 347 are extracellular; that stretch reads KKTVYDEMDTNRCELLSFL. A helical transmembrane segment spans residues 348–372; the sequence is LLMDYIGINLATMNSCINPIALYFV. The Cytoplasmic portion of the chain corresponds to 373–427; that stretch reads SKKFKNCFQSCLCCCCYQSKSLMTSVPMNGTSIQWKNPEQNNHNTERSSHKDSIN. Over residues 405–415 the composition is skewed to polar residues; that stretch reads IQWKNPEQNNH. Residues 405 to 427 are disordered; the sequence is IQWKNPEQNNHNTERSSHKDSIN. Residues 416–427 show a composition bias toward basic and acidic residues; it reads NTERSSHKDSIN. At Ser425 the chain carries Phosphoserine.

This sequence belongs to the G-protein coupled receptor 1 family. Endothelin receptor subfamily. EDNRA sub-subfamily. As to quaternary structure, interacts with HDAC7 and KAT5.

The protein resides in the cell membrane. Receptor for endothelin-1. Mediates its action by association with G proteins that activate a phosphatidylinositol-calcium second messenger system. The rank order of binding affinities for ET-A is: ET1 &gt; ET2 &gt;&gt; ET3. This is Endothelin-1 receptor from Ovis aries (Sheep).